Reading from the N-terminus, the 315-residue chain is Initiation factor TFIIB homolog (315 aa).

This sequence belongs to the asfivirus C315R family.

In terms of biological role, putative initation factor. The polypeptide is Initiation factor TFIIB homolog (African swine fever virus (strain Badajoz 1971 Vero-adapted) (Ba71V)).